We begin with the raw amino-acid sequence, 953 residues long: ABC transporter A family member 11 (953 aa).

The next 6 membrane-spanning stretches (helical) occupy residues 33 to 53 (CLQIFSSFFFILLIFCIEEAM), 230 to 250 (GPVFFLAFSMFGFVLQLGALV), 277 to 297 (TWEGILTLVSSLFLVLFGMIF), 307 to 327 (FVLVFLLFLLFQFNMIGLAFA), 341 to 361 (VGFLVFLIGFITQFVSATGFP), and 417 to 437 (VISINIIYQWLLGTFLFWFVL). Positions 519-764 (VQIHGLAKTY…FGTGFVATVS (246 aa)) constitute an ABC transporter domain. 565-572 (GPNGAGKT) contacts ATP.

This sequence belongs to the ABC transporter superfamily. ABCA family. CPR flippase (TC 3.A.1.211) subfamily.

The protein localises to the membrane. This is ABC transporter A family member 11 (ABCA11) from Arabidopsis thaliana (Mouse-ear cress).